Consider the following 46-residue polypeptide: Endochitinase 4 (46 aa).

This sequence belongs to the glycosyl hydrolase 19 family. Chitinase class I subfamily.

It catalyses the reaction Random endo-hydrolysis of N-acetyl-beta-D-glucosaminide (1-&gt;4)-beta-linkages in chitin and chitodextrins.. Its function is as follows. Defense against chitin-containing fungal and bacterial pathogens. The protein is Endochitinase 4 of Arachis hypogaea (Peanut).